A 782-amino-acid chain; its full sequence is Protein PAT1 homolog 1 (782 aa).

Disordered stretches follow at residues 96 to 153 (GPKH…HSKP), 177 to 217 (LPES…YSAP), 332 to 372 (VREH…SKHM), and 460 to 481 (EVDS…GKHL). The span at 108-117 (SGSFSRESSS) shows a compositional bias: low complexity. Over residues 208-217 (GGSQLTYSAP) the composition is skewed to polar residues. Positions 335-347 (HKHKSSHRSRKNR) are enriched in basic residues. Residues 348–366 (GLSQQTSDAASQKSETGLQ) show a composition bias toward polar residues. The segment covering 471 to 481 (SGDHKGSGKHL) has biased composition (basic and acidic residues).

Interacts with AFPH2/NINJA. As to expression, expressed in root vasculature, shoot apical meristem (SAM) and leaves.

Activator of mRNA decapping. Involved in mRNA decay via decapping. Involved in the regulation of root stem cell niche identity. Maintains root stem cell niche stability through the interaction with the negative regulator of jasmonate signaling AFPH2/NINJA, and the regulation of cell division. The chain is Protein PAT1 homolog 1 from Arabidopsis thaliana (Mouse-ear cress).